The primary structure comprises 213 residues: Phycocyanobilin lyase subunit beta (213 aa).

Belongs to the CpcE/RpcE/PecE family. As to quaternary structure, cpcE and CpcF associate to form a lyase.

Its function is as follows. Required for the chromophorylation of the CpcA gene product. This Thermosynechococcus vestitus (strain NIES-2133 / IAM M-273 / BP-1) protein is Phycocyanobilin lyase subunit beta (cpcF).